A 178-amino-acid polypeptide reads, in one-letter code: UPF0228 protein MM_0401 (178 aa).

Belongs to the UPF0228 family.

The chain is UPF0228 protein MM_0401 from Methanosarcina mazei (strain ATCC BAA-159 / DSM 3647 / Goe1 / Go1 / JCM 11833 / OCM 88) (Methanosarcina frisia).